The sequence spans 169 residues: Probable phospholipid hydroperoxide glutathione peroxidase (169 aa).

Cysteine 43 is a catalytic residue.

This sequence belongs to the glutathione peroxidase family.

Its subcellular location is the cytoplasm. It catalyses the reaction a hydroperoxy polyunsaturated fatty acid + 2 glutathione = a hydroxy polyunsaturated fatty acid + glutathione disulfide + H2O. Protects cells and enzymes from oxidative damage, by catalyzing the reduction of hydrogen peroxide, lipid peroxides and organic hydroperoxide, by glutathione. In Nicotiana tabacum (Common tobacco), this protein is Probable phospholipid hydroperoxide glutathione peroxidase.